The primary structure comprises 587 residues: Pyruvate kinase (587 aa).

Arg-33 is a binding site for substrate. K(+) is bound by residues Asn-35, Ser-37, Asp-67, and Thr-68. 35 to 38 contacts ATP; that stretch reads NFSH. Residues Arg-74 and Lys-157 each contribute to the ATP site. Lys-221 lines the substrate pocket. Position 223 (Glu-223) interacts with Mg(2+). Positions 246, 247, and 279 each coordinate substrate. Mg(2+) is bound at residue Asp-247.

It belongs to the pyruvate kinase family. This sequence in the C-terminal section; belongs to the PEP-utilizing enzyme family. As to quaternary structure, homotetramer. It depends on Mg(2+) as a cofactor. The cofactor is K(+). The N-terminus is blocked.

It carries out the reaction pyruvate + ATP = phosphoenolpyruvate + ADP + H(+). It participates in carbohydrate degradation; glycolysis; pyruvate from D-glyceraldehyde 3-phosphate: step 5/5. Exhibits homotropic positive cooperativity for PEP. Allosterically activated by ribose-5-phosphate, AMP and other nucleoside monophosphates but not by fructose-1,6-bisphosphate. Functionally, catalyzes the phosphoryl transfer from phosphoenolpyruvate (PEP) to ADP to form pyruvate and ATP. Has a broad specificity for nucleoside diphosphates and can use ADP, GDP, IDP and UDP. The protein is Pyruvate kinase (pyk) of Geobacillus stearothermophilus (Bacillus stearothermophilus).